The chain runs to 303 residues: tRNA pseudouridine synthase B (303 aa).

Asp46 acts as the Nucleophile in catalysis.

This sequence belongs to the pseudouridine synthase TruB family. Type 1 subfamily.

The enzyme catalyses uridine(55) in tRNA = pseudouridine(55) in tRNA. In terms of biological role, responsible for synthesis of pseudouridine from uracil-55 in the psi GC loop of transfer RNAs. This is tRNA pseudouridine synthase B from Hydrogenovibrio crunogenus (strain DSM 25203 / XCL-2) (Thiomicrospira crunogena).